The chain runs to 220 residues: Casparian strip membrane protein 4 (220 aa).

The disordered stretch occupies residues 1-39 (MDSRREVEESSTAPILESKRTRSNGKGKSIDGDHSPPHA). Over 1–60 (MDSRREVEESSTAPILESKRTRSNGKGKSIDGDHSPPHAATVVTTKATPLQKGGMKKGIA) the chain is Cytoplasmic. The chain crosses the membrane as a helical span at residues 61 to 81 (ILDFILRLGAIGAALGAAVIM). Over 82–108 (GTNEQILPFFTQFLQFHAQWDDFPMFK) the chain is Extracellular. A helical transmembrane segment spans residues 109–129 (FFVVANGAAAGFLILSLPFSI). Topologically, residues 130 to 141 (VCIVRPLAAGPR) are cytoplasmic. Residues 142–162 (FLLVIVDLVLMALVVAAASSA) form a helical membrane-spanning segment. Residues 163–194 (AAVVYLAHNGSQDANWNAICQQFTDFCQGSSL) are Extracellular-facing. The N-linked (GlcNAc...) asparagine glycan is linked to N171. The helical transmembrane segment at 195 to 215 (AVVASFVASVFLACLVVVSSV) threads the bilayer. The Cytoplasmic portion of the chain corresponds to 216-220 (ALKRT).

It belongs to the Casparian strip membrane proteins (CASP) family. As to quaternary structure, homodimer and heterodimers.

The protein resides in the cell membrane. Its function is as follows. Regulates membrane-cell wall junctions and localized cell wall deposition. Required for establishment of the Casparian strip membrane domain (CSD) and the subsequent formation of Casparian strips, a cell wall modification of the root endodermis that determines an apoplastic barrier between the intraorganismal apoplasm and the extraorganismal apoplasm and prevents lateral diffusion. This chain is Casparian strip membrane protein 4, found in Medicago truncatula (Barrel medic).